Reading from the N-terminus, the 483-residue chain is tRNA sulfurtransferase (483 aa).

Residues 62 to 166 (PQICDALTRV…QDKLTLIKAR (105 aa)) enclose the THUMP domain. Residues 184-185 (LI), Lys-266, Gly-288, and Gln-297 each bind ATP. An intrachain disulfide couples Cys-345 to Cys-457. One can recognise a Rhodanese domain in the interval 405-483 (LADTDVLLDI…GYTNVKVYRP (79 aa)). The Cysteine persulfide intermediate role is filled by Cys-457.

This sequence belongs to the ThiI family.

The protein resides in the cytoplasm. The catalysed reaction is [ThiI sulfur-carrier protein]-S-sulfanyl-L-cysteine + a uridine in tRNA + 2 reduced [2Fe-2S]-[ferredoxin] + ATP + H(+) = [ThiI sulfur-carrier protein]-L-cysteine + a 4-thiouridine in tRNA + 2 oxidized [2Fe-2S]-[ferredoxin] + AMP + diphosphate. It carries out the reaction [ThiS sulfur-carrier protein]-C-terminal Gly-Gly-AMP + S-sulfanyl-L-cysteinyl-[cysteine desulfurase] + AH2 = [ThiS sulfur-carrier protein]-C-terminal-Gly-aminoethanethioate + L-cysteinyl-[cysteine desulfurase] + A + AMP + 2 H(+). It participates in cofactor biosynthesis; thiamine diphosphate biosynthesis. In terms of biological role, catalyzes the ATP-dependent transfer of a sulfur to tRNA to produce 4-thiouridine in position 8 of tRNAs, which functions as a near-UV photosensor. Also catalyzes the transfer of sulfur to the sulfur carrier protein ThiS, forming ThiS-thiocarboxylate. This is a step in the synthesis of thiazole, in the thiamine biosynthesis pathway. The sulfur is donated as persulfide by IscS. The protein is tRNA sulfurtransferase of Yersinia enterocolitica serotype O:8 / biotype 1B (strain NCTC 13174 / 8081).